A 96-amino-acid chain; its full sequence is Putative antiholin (96 aa).

Over 1 to 4 the chain is Periplasmic; it reads MIEM. Cytoplasmic segments lie at residues 1–32 and 26–29; these read MIEM…KKTE and QAIK. Residues 5–25 traverse the membrane as a helical segment; the sequence is EFGKELLVYMTFLVVVTPVFV. Residues 33–55 traverse the membrane as a helical segment; the sequence is LVPSKWLPTVSILIGAILGALAT. Over 56–60 the chain is Periplasmic; it reads FLDGS. The helical transmembrane segment at 61-81 threads the bilayer; it reads GSLATMIWAGALAGAGGTGLF. The Cytoplasmic portion of the chain corresponds to 82–96; it reads EQFTNRSKKYGEDDK.

As to quaternary structure, homomultimer. Interacts with isoform Antiholin; this interaction blocks the holin homomultimerization and delays host cell lysis.

The protein localises to the host cell inner membrane. In terms of biological role, accumulates harmlessly in the cytoplasmic membrane until it reaches a critical concentration that triggers the formation of micron-scale pores (holes) causing host cell membrane disruption and endolysin escape into the periplasmic space. Determines the precise timing of host cell lysis. Participates with the endolysin and spanin proteins in the sequential events which lead to the programmed host cell lysis releasing the mature viral particles from the host cell. Its function is as follows. Isoform Antiholin: Counteracts the aggregation of the holin molecules and thus of pore formation. In Listeria monocytogenes (Bacteriophage A118), this protein is Putative antiholin (hol).